Consider the following 496-residue polypeptide: Squalene epoxidase ERG1 (496 aa).

Over 1 to 16 (MSAVNVAPELINADNT) the chain is Cytoplasmic. The chain crosses the membrane as a helical span at residues 17-37 (ITYDAIVIGAGVIGPCVATGL). FAD is bound by residues 28–29 (VI), 48–49 (ER), arginine 56, and arginine 158. Over 38–474 (ARKGKKVLIV…FLGLPMALLE (437 aa)) the chain is Lumenal. Residues lysine 284, lysine 289, and lysine 311 each participate in a glycyl lysine isopeptide (Lys-Gly) (interchain with G-Cter in ubiquitin) cross-link. FAD contacts are provided by aspartate 335 and methionine 348. Residues 475-495 (GIMILITAIRVFTPFLFGELI) form a helical membrane-spanning segment. A topological domain (cytoplasmic) is located at residue glycine 496.

This sequence belongs to the squalene monooxygenase family. Interacts with ERG28. Requires FAD as cofactor.

It is found in the microsome membrane. The protein localises to the endoplasmic reticulum membrane. Its subcellular location is the lipid droplet. It catalyses the reaction squalene + reduced [NADPH--hemoprotein reductase] + O2 = (S)-2,3-epoxysqualene + oxidized [NADPH--hemoprotein reductase] + H2O + H(+). It functions in the pathway terpene metabolism; lanosterol biosynthesis; lanosterol from farnesyl diphosphate: step 2/3. With respect to regulation, inhibited by the allylamine antimycotic drugs. Functionally, squalene epoxidase; part of the third module of ergosterol biosynthesis pathway that includes the late steps of the pathway. ERG1 catalyzes the epoxidation of squalene into 2,3-epoxysqualene. The third module or late pathway involves the ergosterol synthesis itself through consecutive reactions that mainly occur in the endoplasmic reticulum (ER) membrane. Firstly, the squalene synthase ERG9 catalyzes the condensation of 2 farnesyl pyrophosphate moieties to form squalene, which is the precursor of all steroids. Squalene synthase is crucial for balancing the incorporation of farnesyl diphosphate (FPP) into sterol and nonsterol isoprene synthesis. Secondly, the squalene epoxidase ERG1 catalyzes the stereospecific oxidation of squalene to (S)-2,3-epoxysqualene, which is considered to be a rate-limiting enzyme in steroid biosynthesis. Then, the lanosterol synthase ERG7 catalyzes the cyclization of (S)-2,3 oxidosqualene to lanosterol, a reaction that forms the sterol core. In the next steps, lanosterol is transformed to zymosterol through a complex process involving various demethylation, reduction and desaturation reactions. The lanosterol 14-alpha-demethylase ERG11 (also known as CYP51) catalyzes C14-demethylation of lanosterol to produce 4,4'-dimethyl cholesta-8,14,24-triene-3-beta-ol, which is critical for ergosterol biosynthesis. The C-14 reductase ERG24 reduces the C14=C15 double bond of 4,4-dimethyl-cholesta-8,14,24-trienol to produce 4,4-dimethyl-cholesta-8,24-dienol. 4,4-dimethyl-cholesta-8,24-dienol is substrate of the C-4 demethylation complex ERG25-ERG26-ERG27 in which ERG25 catalyzes the three-step monooxygenation required for the demethylation of 4,4-dimethyl and 4alpha-methylsterols, ERG26 catalyzes the oxidative decarboxylation that results in a reduction of the 3-beta-hydroxy group at the C-3 carbon to an oxo group, and ERG27 is responsible for the reduction of the keto group on the C-3. ERG28 has a role as a scaffold to help anchor ERG25, ERG26 and ERG27 to the endoplasmic reticulum and ERG29 regulates the activity of the iron-containing C4-methylsterol oxidase ERG25. Then, the sterol 24-C-methyltransferase ERG6 catalyzes the methyl transfer from S-adenosyl-methionine to the C-24 of zymosterol to form fecosterol. The C-8 sterol isomerase ERG2 catalyzes the reaction which results in unsaturation at C-7 in the B ring of sterols and thus converts fecosterol to episterol. The sterol-C5-desaturase ERG3 then catalyzes the introduction of a C-5 double bond in the B ring to produce 5-dehydroepisterol. The C-22 sterol desaturase ERG5 further converts 5-dehydroepisterol into ergosta-5,7,22,24(28)-tetraen-3beta-ol by forming the C-22(23) double bond in the sterol side chain. Finally, ergosta-5,7,22,24(28)-tetraen-3beta-ol is substrate of the C-24(28) sterol reductase ERG4 to produce ergosterol. In Saccharomyces cerevisiae (strain ATCC 204508 / S288c) (Baker's yeast), this protein is Squalene epoxidase ERG1.